The primary structure comprises 957 residues: Glycine dehydrogenase (decarboxylating) (957 aa).

N6-(pyridoxal phosphate)lysine is present on K708.

The protein belongs to the GcvP family. As to quaternary structure, the glycine cleavage system is composed of four proteins: P, T, L and H. Pyridoxal 5'-phosphate serves as cofactor.

The catalysed reaction is N(6)-[(R)-lipoyl]-L-lysyl-[glycine-cleavage complex H protein] + glycine + H(+) = N(6)-[(R)-S(8)-aminomethyldihydrolipoyl]-L-lysyl-[glycine-cleavage complex H protein] + CO2. In terms of biological role, the glycine cleavage system catalyzes the degradation of glycine. The P protein binds the alpha-amino group of glycine through its pyridoxal phosphate cofactor; CO(2) is released and the remaining methylamine moiety is then transferred to the lipoamide cofactor of the H protein. This chain is Glycine dehydrogenase (decarboxylating), found in Escherichia coli O7:K1 (strain IAI39 / ExPEC).